Here is a 3530-residue protein sequence, read N- to C-terminus: Unconventional myosin-XV (3530 aa).

3 disordered regions span residues 1 to 46 (MAKE…RTPK), 615 to 710 (AGMD…PAHV), and 730 to 1057 (EVPP…QKTL). Positions 663–681 (PPVPPRPPSSGPPPAPPLS) are enriched in pro residues. Low complexity-rich tracts occupy residues 682–693 (PALSGLPRPASP), 753–763 (AAFGFPGASPR), and 823–835 (SPAP…RLGP). The span at 836–850 (PGSPLPGSPRPPSPP) shows a compositional bias: pro residues. Low complexity predominate over residues 859–869 (RSSLNLPSRLP). Residues 903 to 913 (PLEHRESPREP) show a composition bias toward basic and acidic residues. Positions 1027–1038 (TKPPTPAPPKDV) are enriched in pro residues. The Myosin motor domain maps to 1222–1899 (DGVEDMTQLE…LYQLLESMRE (678 aa)). Residue 1315–1322 (GESGSGKT) coordinates ATP. Residues 1323-1350 (EATKLILRYLAAMNQKREVMQQIKILEA) are a coiled coil. Positions 1792-1799 (FMRCLKPN) are actin-binding. The tract at residues 1888–2029 (EHLYQLLESM…AQVPQVAPVR (142 aa)) is neck or regulatory domain. IQ domains lie at 1902-1924 (LNLA…RFRS), 1925-1954 (LRHK…SLVK), and 1955-1976 (FRSL…AEWR). The segment at 2030 to 3530 (TPRLQAEPRV…TLPPSEITLL (1501 aa)) is tail. A MyTH4 1 domain is found at 2065-2217 (MLTVPLRTPL…PTQLEWTATY (153 aa)). Disordered stretches follow at residues 2311–2381 (AASR…GEPA), 2414–2446 (YRMK…IPGL), 2490–2509 (AEKP…GPPA), and 2644–2665 (TSAP…LEPP). The segment covering 2349 to 2371 (GYSSHNQDGTNGETEAQRGTATH) has biased composition (polar residues). The segment covering 2417-2427 (KGGGQPGGGSS) has biased composition (gly residues). In terms of domain architecture, SH3 spans 2867–2953 (KDSDYVVAVR…PSELVQPAAA (87 aa)). The MyTH4 2 domain maps to 3050–3204 (FTKTPLQESL…PSSIELRAML (155 aa)). An FERM domain is found at 3209–3530 (SKRQLFLLPG…TLPPSEITLL (322 aa)).

This sequence belongs to the TRAFAC class myosin-kinesin ATPase superfamily. Myosin family. Interacts with the third PDZ domain of WHRN which is necessary for localization of WHRN to stereocilium tips. Interacts with EPS8. Interacts with FASLG. Highly expressed in pituitary. Also expressed at lower levels in adult brain, kidney, liver, lung, pancreas, placenta and skeletal muscle. Not expressed in brain. In the pituitary, highly expressed in anterior gland cells.

The protein resides in the cell projection. The protein localises to the stereocilium. It localises to the cytoplasm. It is found in the cytoskeleton. Functionally, myosins are actin-based motor molecules with ATPase activity. Unconventional myosins serve in intracellular movements. Their highly divergent tails are presumed to bind to membranous compartments, which would be moved relative to actin filaments. Required for the arrangement of stereocilia in mature hair bundles. The sequence is that of Unconventional myosin-XV (MYO15A) from Homo sapiens (Human).